The following is a 656-amino-acid chain: uncharacterized protein (656 aa).

3 helical membrane passes run 7–27 (QQVL…LNHL), 40–60 (LMAM…FWTL), and 210–230 (AVFI…AFTI). The HAMP domain occupies 231-280 (TRPIRELLTGVKNIASGDFYQRIDLPFGGELGALIFNFNEMAERLEKYEQ). Positions 289–359 (EKAKLETLVS…PILNDIIRKN (71 aa)) constitute a PAS domain. Residues 424–654 (NVSHELRTPL…CFFFDLMIAK (231 aa)) form the Histidine kinase domain. His427 bears the Phosphohistidine; by autocatalysis mark.

The protein localises to the plastid. It is found in the chloroplast membrane. It carries out the reaction ATP + protein L-histidine = ADP + protein N-phospho-L-histidine.. This is an uncharacterized protein from Porphyra purpurea (Red seaweed).